Here is a 211-residue protein sequence, read N- to C-terminus: Ras-related protein rab-11.1 (211 aa).

18 to 26 (GDSGVGKSN) is a GTP binding site. Positions 40–48 (SKSTIGVEF) match the Effector region motif. Residues 66-70 (DTAGQ), 124-127 (NKSD), and 154-156 (SAL) each bind GTP. Residues 187-211 (GYGGGSGTIIPSPASDPPKKQCCIP) are disordered. S-geranylgeranyl cysteine attachment occurs at residues C208 and C209.

The protein belongs to the small GTPase superfamily. Rab family. As to quaternary structure, interacts with rei-1 and rei-2. The GDP-form preferentially binds to rei-1 and rei-2. As to expression, expressed weakly in sperm, but more predominantly in oocytes. Expressed in the intestine.

Its subcellular location is the cytoplasmic vesicle. The protein resides in the secretory vesicle. It localises to the endosome. It is found in the cytoplasm. The protein localises to the cytoskeleton. Its subcellular location is the spindle. The protein resides in the microtubule organizing center. It localises to the spindle pole body. It is found in the centrosome. The protein localises to the apical cell membrane. Its subcellular location is the cytosol. The protein resides in the recycling endosome membrane. It localises to the golgi apparatus membrane. It is found in the cytoplasmic granule. The small GTPases Rab are key regulators of intracellular membrane trafficking, from the formation of transport vesicles to their fusion with membranes. Rabs cycle between an inactive GDP-bound form and an active GTP-bound form that is able to recruit to membranes different set of downstream effectors directly responsible for vesicle formation, movement, tethering and fusion. Involved in regulating the meiotic maturation of oocytes. Plays a role in egg shell formation, regulating exocytosis of chondroitin proteoglycans following fertilization. Controls cortical granule localization and targets them to the plasma membrane for exocytosis. Acts as a major regulator of membrane delivery during cytokinesis. Regulates the cytoskeleton by facilitating astral microtubule elongation and organization during metaphase to ensure proper spindle alignment and polarity in the first embryonic cell division. Maintains normal endoplasmic reticulum morphology during metaphase. Involved in vesicle formation and plasma membrane repair following exposure to pore forming toxins. Regulates endocytic recycling. May play a role in yolk receptor endocytosis in growing oocytes. Plays a role in the shedding of pathogen spores from intestinal cells via its involvement in spore fusion and endocytic trafficking. This chain is Ras-related protein rab-11.1, found in Caenorhabditis elegans.